The primary structure comprises 473 residues: 3-isopropylmalate dehydratase large subunit (473 aa).

3 residues coordinate [4Fe-4S] cluster: cysteine 351, cysteine 414, and cysteine 417.

Belongs to the aconitase/IPM isomerase family. LeuC type 1 subfamily. In terms of assembly, heterodimer of LeuC and LeuD. It depends on [4Fe-4S] cluster as a cofactor.

The enzyme catalyses (2R,3S)-3-isopropylmalate = (2S)-2-isopropylmalate. The protein operates within amino-acid biosynthesis; L-leucine biosynthesis; L-leucine from 3-methyl-2-oxobutanoate: step 2/4. Catalyzes the isomerization between 2-isopropylmalate and 3-isopropylmalate, via the formation of 2-isopropylmaleate. The polypeptide is 3-isopropylmalate dehydratase large subunit (Variovorax paradoxus (strain S110)).